Consider the following 33-residue polypeptide: GFFALIPKIISSPIFKTLLSAVGSALSSSGGQE.

This sequence belongs to the pardaxin family. In aqueous solution exists as a tetramer.

Its subcellular location is the secreted. It is found in the target cell membrane. In terms of biological role, exhibits unusual shark repellent and surfactant properties. Forms voltage-dependent, ion-permeable channels in membranes. At high concentration causes cell membrane lysis. The chain is Pardaxin P-2 from Pardachirus pavoninus (Peacock sole).